The chain runs to 195 residues: NADH-quinone oxidoreductase subunit B (195 aa).

Residues cysteine 74, cysteine 75, cysteine 139, and cysteine 169 each contribute to the [4Fe-4S] cluster site.

It belongs to the complex I 20 kDa subunit family. As to quaternary structure, NDH-1 is composed of 14 different subunits. Subunits NuoB, C, D, E, F, and G constitute the peripheral sector of the complex. It depends on [4Fe-4S] cluster as a cofactor.

The protein localises to the cell inner membrane. The catalysed reaction is a quinone + NADH + 5 H(+)(in) = a quinol + NAD(+) + 4 H(+)(out). NDH-1 shuttles electrons from NADH, via FMN and iron-sulfur (Fe-S) centers, to quinones in the respiratory chain. The immediate electron acceptor for the enzyme in this species is believed to be ubiquinone. Couples the redox reaction to proton translocation (for every two electrons transferred, four hydrogen ions are translocated across the cytoplasmic membrane), and thus conserves the redox energy in a proton gradient. The chain is NADH-quinone oxidoreductase subunit B from Methylorubrum extorquens (strain PA1) (Methylobacterium extorquens).